The primary structure comprises 471 residues: ATP synthase subunit beta (471 aa).

154 to 161 (GGAGVGKT) serves as a coordination point for ATP.

Belongs to the ATPase alpha/beta chains family. As to quaternary structure, F-type ATPases have 2 components, CF(1) - the catalytic core - and CF(0) - the membrane proton channel. CF(1) has five subunits: alpha(3), beta(3), gamma(1), delta(1), epsilon(1). CF(0) has three main subunits: a(1), b(2) and c(9-12). The alpha and beta chains form an alternating ring which encloses part of the gamma chain. CF(1) is attached to CF(0) by a central stalk formed by the gamma and epsilon chains, while a peripheral stalk is formed by the delta and b chains.

The protein localises to the cell membrane. It carries out the reaction ATP + H2O + 4 H(+)(in) = ADP + phosphate + 5 H(+)(out). Its function is as follows. Produces ATP from ADP in the presence of a proton gradient across the membrane. The catalytic sites are hosted primarily by the beta subunits. The chain is ATP synthase subunit beta from Mesomycoplasma hyopneumoniae (strain 7448) (Mycoplasma hyopneumoniae).